Here is a 136-residue protein sequence, read N- to C-terminus: Protein NrdI (136 aa).

This sequence belongs to the NrdI family.

Functionally, probably involved in ribonucleotide reductase function. This Citrobacter koseri (strain ATCC BAA-895 / CDC 4225-83 / SGSC4696) protein is Protein NrdI.